The primary structure comprises 520 residues: AarF domain-containing protein kinase 1 (520 aa).

The Protein kinase domain maps to 148-455 (EFEKTPLGAA…GTHSSSSAFF (308 aa)). ATP-binding positions include 154–162 (LGAASLAQV) and K176. The active-site Proton acceptor is the D308.

It belongs to the protein kinase superfamily. ADCK protein kinase family.

The protein localises to the mitochondrion. Functionally, appears to be essential for maintaining mitochondrial cristae formation and mitochondrial function by acting via YME1L1 in a kinase-independent manner to regulate essential mitochondrial structural proteins OPA1 and IMMT. The action of this enzyme is not yet clear. It is not known if it has protein kinase activity and what type of substrate it would phosphorylate (Ser, Thr or Tyr). This Xenopus laevis (African clawed frog) protein is AarF domain-containing protein kinase 1 (adck1).